We begin with the raw amino-acid sequence, 369 residues long: Protein FAM187B (369 aa).

The signal sequence occupies residues 1-17 (MPPMLWLLLHFAAPALG). Residues 18–335 (FYFSISCPSG…RADSVLKGLK (318 aa)) lie on the Extracellular side of the membrane. 3 N-linked (GlcNAc...) asparagine glycosylation sites follow: asparagine 45, asparagine 68, and asparagine 130. The chain crosses the membrane as a helical span at residues 336 to 356 (LVLLVVTVLALLGALLKCIHP). At 357-369 (SPGRRSTQVLVVK) the chain is on the cytoplasmic side.

This sequence belongs to the FAM187 family.

Its subcellular location is the membrane. The sequence is that of Protein FAM187B (FAM187B) from Homo sapiens (Human).